An 89-amino-acid chain; its full sequence is Acylphosphatase (89 aa).

The 87-residue stretch at 3-89 (ALEIYVSGNV…ENYESFEVAY (87 aa)) folds into the Acylphosphatase-like domain. Active-site residues include Arg18 and Asn36.

It belongs to the acylphosphatase family.

It catalyses the reaction an acyl phosphate + H2O = a carboxylate + phosphate + H(+). The chain is Acylphosphatase (acyP) from Archaeoglobus fulgidus (strain ATCC 49558 / DSM 4304 / JCM 9628 / NBRC 100126 / VC-16).